Here is a 407-residue protein sequence, read N- to C-terminus: MISIKGTGRFLLDNYRIWQRRAFNRPIQLRKGYKVLAIETSCDDTCVSVLDRFSKSAAPNVLANLKDTLDSIDEGGIIPTKAHIHHQARIGPLTERALIESNAREGIDLICVTRGPGMPGSLSGGLDFAKGLAVAWNKPLIGVHHMLGHLLIPRMGTNGKVPQFPFVSLLVSGGHTTFVLSRAIDDHEILCDTIDIAVGDSLDKCGRELGFKGTMIAREMEKFINQDINDQDFALKLEMPSPLKNSASKRNMLSFSFSAFITALRTNLTKLGKTEIQELPEREIRSIAYQVQESVFDHIINKLKHVLKSQPEKFKNVREFVCSGGVSSNQRLRTKLETELGTLNSTSFFNFYYPPMDLCSDNSIMIGWAGIEIWESLRLVSDLDICPIRQWPLNDLLSVDGWRTDQL.

A mitochondrion-targeting transit peptide spans 1-30 (MISIKGTGRFLLDNYRIWQRRAFNRPIQLR). 2 residues coordinate a divalent metal cation: His145 and His149. Residues 170–174 (LVSGG), Asp203, Ala217, Glu221, 328–329 (SN), and Ser360 each bind substrate. Residue Asp361 participates in a divalent metal cation binding.

Belongs to the KAE1 / TsaD family. In terms of assembly, homodimer. Requires a divalent metal cation as cofactor.

It is found in the mitochondrion. The enzyme catalyses L-threonylcarbamoyladenylate + adenosine(37) in tRNA = N(6)-L-threonylcarbamoyladenosine(37) in tRNA + AMP + H(+). Its function is as follows. Required for the formation of a threonylcarbamoyl group on adenosine at position 37 (t(6)A37) in mitochondrial tRNAs that read codons beginning with adenine. Probably involved in the transfer of the threonylcarbamoyl moiety of threonylcarbamoyl-AMP (TC-AMP) to the N6 group of A37. Involved in mitochondrial genome maintenance. The chain is tRNA N6-adenosine threonylcarbamoyltransferase, mitochondrial (QRI7) from Saccharomyces cerevisiae (strain ATCC 204508 / S288c) (Baker's yeast).